The chain runs to 867 residues: 2-methylcitrate dehydratase (2-methyl-trans-aconitate forming) (867 aa).

[4Fe-4S] cluster is bound by residues Cys-410, Cys-476, and Cys-479.

It belongs to the aconitase/IPM isomerase family. Requires [4Fe-4S] cluster as cofactor.

The enzyme catalyses (2S,3S)-2-methylcitrate = 2-methyl-trans-aconitate + H2O. It carries out the reaction citrate = D-threo-isocitrate. It participates in organic acid metabolism; propanoate degradation. Inhibited by ferricyanide and EDTA. In terms of biological role, involved in the catabolism of short chain fatty acids (SCFA) via the 2-methylcitrate cycle II (propionate degradation route). In vivo under anaerobic conditions, AcnD catalyzes the stereospecific dehydration of (2S,3S)-methylcitrate (2-MC) to yield the trans isomer of 2-methyl-aconitate (2-MCA). AcnD can also accept citrate and cis-aconitate, but with a lower efficiency. 2-methylisocitrate and isocitrate are not substrates. The sequence is that of 2-methylcitrate dehydratase (2-methyl-trans-aconitate forming) (acnD) from Shewanella oneidensis (strain ATCC 700550 / JCM 31522 / CIP 106686 / LMG 19005 / NCIMB 14063 / MR-1).